We begin with the raw amino-acid sequence, 2297 residues long: MDGDGGRRDVPGTLMEPGRGAGPAGMAEPRAKAARPGPQRFLRRSVVESDQEEPPGLEAAEAPGPQPPQPLQRRVLLLCKTRRLIAERARGRPAAPAPAALVAQPGAPGAPADAGPEPVGTQEPGPDPIAAAVETAPAPDGGPREEAAATVRKEDEGAAEAKPEPGRTRRDEPEEEEDDEDDLKAVATSLDGRFLKFDIELGRGSFKTVYKGLDTETWVEVAWCELQDRKLTKLERQRFKEEAEMLKGLQHPNIVRFYDFWESSAKGKRCIVLVTELMTSGTLKTYLKRFKVMKPKVLRSWCRQILKGLLFLHTRTPPIIHRDLKCDNIFITGPTGSVKIGDLGLATLKRASFAKSVIGTPEFMAPEMYEEHYDESVDVYAFGMCMLEMATSEYPYSECQNAAQIYRKVTCGIKPASFEKVHDPEIKEIIGECICKNKEERYEIKDLLSHAFFAEDTGVRVELAEEDHGRKSTIALRLWVEDPKKLKGKPKDNGAIEFTFDLEKETPDEVAQEMIESGFFHESDVKIVAKSIRDRVALIQWRRERIWPALQPKEQQDVGSPDKARGPPVPLQVQVTYHAQAGQPGPPEPEEPEADQHLLPPTLPTSATSLASDSTFDSGQGSTVYSDSQSSQQSVMLGSLADAAPSPAQCVCSPPVSEGPVLPQSLPSLGAYQQPTAAPGLPVGSVPAPACPPSLQQHFPDPAMSFAPVLPPPSTPMPTGPGQPAPPGQQPPPLAQPTPLPQVLAPQPVVPLQPVPPHLPPYLAPASQVGAPAQLKPLQMPQAPLQPLAQVPPQMPPIPVVPPITPLAGIDGLPPALPDLPTATVPPVPPPQYFSPAVILPSLAAPLPPASPALPLQAVKLPHPPGAPLAMPCRTIVPNAPATIPLLAVAPPGVAALSIHSAVAQLPGQPVYPAAFPQMAPTDVPPSPHHTVQNMRATPPQPALPPQPTLPPQPVLPPQPTLPPQPVLPPQPTRPPQPVLPPQPMLPPQPVLPPQPALPVRPEPLQPHLPEQAAPAATPGSQILLGHPAPYAVDVAAQVPTVPVPPAAVLSPPLPEVLLPAAPELLPQFPSSLATVSASVQSVPTQTATLLPPANPPLPGGPGIASPCPTVQLTVEPVQEEQASQDKPPGLPQSCESYGGSDVTSGKELSDSCEGAFGGGRLEGRAARKHHRRSTRARSRQERASRPRLTILNVCNTGDKMVECQLETHNHKMVTFKFDLDGDAPDEIATYMVEHDFILQAERETFIEQMKDVMDKAEDMLSEDTDADRGSDPGTSPPHLSTCGLGTGEESRQSQANAPVYQQNVLHTGKRWFIICPVAEHPAPEAPESSPPLPLSSLPPEASQGPCRGLTLPCLPWRRAACGAVFLSLFSAESAQSKQPPDSAPYKDQLSSKEQPSFLASQQLLSQAGPSNPPGAPPAPLAPSSPPVTALPQDGAAPATSTMPEPASGTASQAGGPGTPQGLTSELETSQPLAETHEAPLAVQPLVVGLAPCTPAPEAASTRDASAPREPLPPPAPEPSPHSGTPQPALGQPAPLLPAAVGAVSLATSQLPSPPLGPTVPPQPPSALESDGEGPPPRVGFVDSTIKSLDEKLRTLLYQEHVPTSSASAGTPVEVGDRDFTLEPLRGDQPRSEVCGGDLALPPVPKEAVSGRVQLPQPLVEKSELAPTRGAVMEQGTSSSMTAESSPRSMLGYDRDGRQVASDSHVVPSVPQDVPAFVRPARVEPTDRDGGEAGESSAEPPPSDMGTVGGQASHPQTLGARALGSPRKRPEQQDVSSPAKTVGRFSVVSTQDEWTLASPHSLRYSAPPDVYLDEAPSSPDVKLAVRRAQTASSIEVGVGEPVSSDSGDEGPRARPPVQKQASLPVSGSVAGDFVKKATAFLQRPSRAGSLGPETPSRVGMKVPTISVTSFHSQSSYISSDNDSELEDADIKKELQSLREKHLKEISELQSQQKQEIEALYRRLGKPLPPNVGFFHTAPPTGRRRKTSKSKLKAGKLLNPLVRQLKVVASSTGHLADSSRGPPAKDPAQASVGLTADSTGLSGKAVQTQQPCSVRASLSSDICSGLASDGGGARGQGWTVYHPTSERVTYKSSSKPRARFLSGPVSVSIWSALKRLCLGKEHSSRSSTSSLAPGPEPGPQPALHVQAQVNNSNNKKGTFTDDLHKLVDEWTSKTVGAAQLKPTLNQLKQTQKLQDMEAQAGWAAPGEARAMTAPRAGVGMPRLPPAPGPLSTTVIPGAAPTLSVPTPDGALGTARRNQVWFGLRVPPTACCGHSTQPRGGQRVGSKTASFAASDPVRS.

Basic and acidic residues predominate over residues 1–10 (MDGDGGRRDV). Disordered regions lie at residues 1–75 (MDGD…QRRV) and 89–183 (ARGR…EDDL). Omega-N-methylarginine occurs at positions 19 and 30. At serine 45 the chain carries Phosphoserine. Residues 92 to 120 (RPAAPAPAALVAQPGAPGAPADAGPEPVG) show a composition bias toward low complexity. Residues 142–172 (GPREEAAATVRKEDEGAAEAKPEPGRTRRDE) show a composition bias toward basic and acidic residues. Over residues 173 to 182 (PEEEEDDEDD) the composition is skewed to acidic residues. The 259-residue stretch at 195 to 453 (LKFDIELGRG…IKDLLSHAFF (259 aa)) folds into the Protein kinase domain. Residues serine 205, 275–278 (TELM), and lysine 325 each bind ATP. The active-site Proton acceptor is the aspartate 342. A phosphoserine; by autocatalysis mark is found at serine 352 and serine 356. The residue at position 560 (serine 560) is a Phosphoserine. 8 disordered regions span residues 579–630 (AQAG…DSQS), 699–751 (FPDP…PVVP), 917–1022 (PQMA…PGSQ), 1117–1185 (PVQE…ERAS), 1262–1297 (SEDT…SQAN), 1323–1345 (APEA…ASQG), 1374–1480 (SAQS…HEAP), and 1492–1586 (PCTP…DSTI). The span at 604-625 (PTSATSLASDSTFDSGQGSTVY) shows a compositional bias: polar residues. 2 stretches are compositionally biased toward pro residues: residues 709-740 (VLPP…PTPL) and 939-1007 (PPQP…PLQP). Serine 1150 bears the Phosphoserine mark. The span at 1167–1178 (ARKHHRRSTRAR) shows a compositional bias: basic residues. Serine 1262 is modified (phosphoserine). The span at 1392 to 1406 (SKEQPSFLASQQLLS) shows a compositional bias: polar residues. Pro residues predominate over residues 1411 to 1426 (SNPPGAPPAPLAPSSP). 2 stretches are compositionally biased toward polar residues: residues 1439-1453 (ATST…TASQ) and 1461-1473 (QGLT…SQPL). Residues 1510 to 1520 (EPLPPPAPEPS) show a composition bias toward pro residues. A compositionally biased stretch (low complexity) spans 1526–1544 (PQPALGQPAPLLPAAVGAV). The span at 1552–1565 (PSPPLGPTVPPQPP) shows a compositional bias: pro residues. The residue at position 1588 (serine 1588) is a Phosphoserine. Positions 1621 to 1631 (TLEPLRGDQPR) are enriched in basic and acidic residues. Residues 1621–1865 (TLEPLRGDQP…PVQKQASLPV (245 aa)) are disordered. The segment covering 1675 to 1688 (QGTSSSMTAESSPR) has biased composition (polar residues). The residue at position 1685 (serine 1685) is a Phosphoserine. Over residues 1721-1731 (ARVEPTDRDGG) the composition is skewed to basic and acidic residues. Phosphoserine occurs at positions 1736, 1817, 1818, 1862, and 1889. Disordered regions lie at residues 1970–1990 (NVGF…SKSK) and 2011–2031 (TGHL…QASV). A compositionally biased stretch (basic residues) spans 1981–1990 (GRRRKTSKSK). Serine 2067 carries the post-translational modification Phosphoserine. Disordered stretches follow at residues 2123–2142 (SRSS…QPAL) and 2269–2297 (CCGH…PVRS). Residues 2272–2289 (HSTQPRGGQRVGSKTASF) are compositionally biased toward polar residues.

It belongs to the protein kinase superfamily. Ser/Thr protein kinase family. WNK subfamily. In terms of assembly, forms a complex with the phosphorylated form of STK39. Mg(2+) is required as a cofactor. Autophosphorylated. Autophosphorylation at Ser-352 and Ser-356 promotes its activity. In terms of tissue distribution, expressed in various cancer cell lines (at protein level). Predominantly expressed in heart, brain, skeletal muscle and colon.

Its subcellular location is the cytoplasm. It localises to the cell membrane. It carries out the reaction L-seryl-[protein] + ATP = O-phospho-L-seryl-[protein] + ADP + H(+). The enzyme catalyses L-threonyl-[protein] + ATP = O-phospho-L-threonyl-[protein] + ADP + H(+). Activation requires autophosphorylation of Ser-356 and, to a lower extent, Ser-352. Its function is as follows. Serine/threonine-protein kinase component of the WNK2-SPAK/OSR1 kinase cascade, which plays an important role in the regulation of electrolyte homeostasis, cell signaling, survival, and proliferation. The WNK2-SPAK/OSR1 kinase cascade is composed of WNK2, which mediates phosphorylation and activation of downstream kinases OXSR1/OSR1 and STK39/SPAK. Following activation, OXSR1/OSR1 and STK39/SPAK catalyze phosphorylation of ion cotransporters, regulating their activity. Acts as an activator and inhibitor of sodium-coupled chloride cotransporters and potassium-coupled chloride cotransporters respectively. Activates SLC12A2, SCNN1A, SCNN1B, SCNN1D and SGK1 and inhibits SLC12A5. Negatively regulates the EGF-induced activation of the ERK/MAPK-pathway and the downstream cell cycle progression. Affects MAPK3/MAPK1 activity by modulating the activity of MAP2K1 and this modulation depends on phosphorylation of MAP2K1 by PAK1. WNK2 acts by interfering with the activity of PAK1 by controlling the balance of the activity of upstream regulators of PAK1 activity, RHOA and RAC1, which display reciprocal activity. This chain is Serine/threonine-protein kinase WNK2, found in Homo sapiens (Human).